Here is a 306-residue protein sequence, read N- to C-terminus: Bifunctional protein FolD 1 (306 aa).

Residues 170–172 (GRG), Thr-199, and Val-240 each bind NADP(+). The disordered stretch occupies residues 285–306 (ARRTRSSRTPVRLPDSGAPAGR).

It belongs to the tetrahydrofolate dehydrogenase/cyclohydrolase family. Homodimer.

The catalysed reaction is (6R)-5,10-methylene-5,6,7,8-tetrahydrofolate + NADP(+) = (6R)-5,10-methenyltetrahydrofolate + NADPH. It catalyses the reaction (6R)-5,10-methenyltetrahydrofolate + H2O = (6R)-10-formyltetrahydrofolate + H(+). It functions in the pathway one-carbon metabolism; tetrahydrofolate interconversion. Its function is as follows. Catalyzes the oxidation of 5,10-methylenetetrahydrofolate to 5,10-methenyltetrahydrofolate and then the hydrolysis of 5,10-methenyltetrahydrofolate to 10-formyltetrahydrofolate. The chain is Bifunctional protein FolD 1 from Salinispora tropica (strain ATCC BAA-916 / DSM 44818 / JCM 13857 / NBRC 105044 / CNB-440).